Consider the following 358-residue polypeptide: Alanine racemase (358 aa).

Catalysis depends on K35, which acts as the Proton acceptor; specific for D-alanine. K35 is modified (N6-(pyridoxal phosphate)lysine). R130 provides a ligand contact to substrate. Y255 functions as the Proton acceptor; specific for L-alanine in the catalytic mechanism. M303 serves as a coordination point for substrate.

This sequence belongs to the alanine racemase family. Pyridoxal 5'-phosphate serves as cofactor.

The enzyme catalyses L-alanine = D-alanine. It functions in the pathway amino-acid biosynthesis; D-alanine biosynthesis; D-alanine from L-alanine: step 1/1. In terms of biological role, catalyzes the interconversion of L-alanine and D-alanine. May also act on other amino acids. The chain is Alanine racemase (alr) from Shewanella woodyi (strain ATCC 51908 / MS32).